Here is a 345-residue protein sequence, read N- to C-terminus: Uroporphyrinogen decarboxylase (345 aa).

Residues 27–31, F46, D76, Y152, S207, and H321 contribute to the substrate site; that span reads RQAGR.

Belongs to the uroporphyrinogen decarboxylase family. In terms of assembly, homodimer.

Its subcellular location is the cytoplasm. The enzyme catalyses uroporphyrinogen III + 4 H(+) = coproporphyrinogen III + 4 CO2. It participates in porphyrin-containing compound metabolism; protoporphyrin-IX biosynthesis; coproporphyrinogen-III from 5-aminolevulinate: step 4/4. Its function is as follows. Catalyzes the decarboxylation of four acetate groups of uroporphyrinogen-III to yield coproporphyrinogen-III. This chain is Uroporphyrinogen decarboxylase, found in Staphylococcus aureus (strain USA300 / TCH1516).